The sequence spans 678 residues: DNA ligase (678 aa).

Residues 36–40 (DAEYD), 85–86 (SL), and Glu-117 each bind NAD(+). Lys-119 (N6-AMP-lysine intermediate) is an active-site residue. NAD(+) contacts are provided by Arg-140, Glu-177, Lys-294, and Lys-318. 4 residues coordinate Zn(2+): Cys-412, Cys-415, Cys-430, and Cys-436. The 84-residue stretch at 595–678 (ADEQPLNGQT…NLLREHGIEV (84 aa)) folds into the BRCT domain.

Belongs to the NAD-dependent DNA ligase family. LigA subfamily. It depends on Mg(2+) as a cofactor. Requires Mn(2+) as cofactor.

It catalyses the reaction NAD(+) + (deoxyribonucleotide)n-3'-hydroxyl + 5'-phospho-(deoxyribonucleotide)m = (deoxyribonucleotide)n+m + AMP + beta-nicotinamide D-nucleotide.. In terms of biological role, DNA ligase that catalyzes the formation of phosphodiester linkages between 5'-phosphoryl and 3'-hydroxyl groups in double-stranded DNA using NAD as a coenzyme and as the energy source for the reaction. It is essential for DNA replication and repair of damaged DNA. This Marinobacter nauticus (strain ATCC 700491 / DSM 11845 / VT8) (Marinobacter aquaeolei) protein is DNA ligase.